Reading from the N-terminus, the 36-residue chain is uncharacterized protein (36 aa).

This is an uncharacterized protein from Enterobacteria phage T4 (Bacteriophage T4).